A 351-amino-acid polypeptide reads, in one-letter code: V-type proton ATPase subunit d2 (351 aa).

The protein belongs to the V-ATPase V0D/AC39 subunit family. In terms of assembly, V-ATPase is a heteromultimeric enzyme composed of a peripheral catalytic V1 complex (components A to H) attached to an integral membrane V0 proton pore complex (components: a, c, c'', d and e).

The protein resides in the vacuole membrane. Its function is as follows. Subunit of the integral membrane V0 complex of vacuolar ATPase. Vacuolar ATPase is responsible for acidifying a variety of intracellular compartments in eukaryotic cells, thus providing most of the energy required for transport processes in the vacuolar system. This is V-type proton ATPase subunit d2 (VHA-d2) from Arabidopsis thaliana (Mouse-ear cress).